The chain runs to 411 residues: Adherens junction-associated protein 1 (411 aa).

The first 43 residues, 1 to 43, serve as a signal peptide directing secretion; it reads MWIQQLLGLSSMSIRWPGRPLGSHAWILIAMFQLAVDLPACEA. The Extracellular portion of the chain corresponds to 44-282; it reads LGPGPEFWLL…GEASGLAVHQ (239 aa). Disordered regions lie at residues 89 to 108, 115 to 197, and 239 to 268; these read IHGQ…RDQA, AGLA…SNTF, and SLDP…VTQP. The segment covering 115–146 has biased composition (low complexity); sequence AGLAKPPAAAKSSPSLASSSSSSSSAVAGGAP. Residues 166–178 are compositionally biased toward polar residues; that stretch reads SFDSRGSRPTTET. The segment covering 247-263 has biased composition (low complexity); sequence PGGVSTTEPSTSPSNNG. A helical transmembrane segment spans residues 283–303; the sequence is IITITVSLIMVIAALITTLVL. The segment at 303-411 is targeting signals; that stretch reads LKNCCAQSGN…VSEKWFEISC (109 aa). Residues 304–411 are Cytoplasmic-facing; that stretch reads KNCCAQSGNT…VSEKWFEISC (108 aa). The interval 311-330 is disordered; the sequence is GNTRRNSHQRKTNQQEESCQ.

In terms of assembly, forms a complex with CDH1 and CTNNB1; interacts directly with CTNNB1. Interacts with AP1M2. Interacts with isoform 2 of BSG/CD147. Thr-237 and Ser-239 may be phosphorylated; however as this position is probably extracellular, the in vivo relevance is not proven. Expressed in uterus and pancreas (at protein level).

It is found in the basolateral cell membrane. It localises to the apical cell membrane. The protein resides in the cell junction. The protein localises to the adherens junction. Its function is as follows. Plays a role in cell adhesion and cell migration. The chain is Adherens junction-associated protein 1 (AJAP1) from Homo sapiens (Human).